The following is a 545-amino-acid chain: Glucose-6-phosphate isomerase 1 (545 aa).

Residue Glu356 is the Proton donor of the active site. Active-site residues include His387 and Lys508.

It belongs to the GPI family.

It is found in the cytoplasm. It carries out the reaction alpha-D-glucose 6-phosphate = beta-D-fructose 6-phosphate. Its pathway is carbohydrate biosynthesis; gluconeogenesis. The protein operates within carbohydrate degradation; glycolysis; D-glyceraldehyde 3-phosphate and glycerone phosphate from D-glucose: step 2/4. Functionally, catalyzes the reversible isomerization of glucose-6-phosphate to fructose-6-phosphate. In Cupriavidus pinatubonensis (strain JMP 134 / LMG 1197) (Cupriavidus necator (strain JMP 134)), this protein is Glucose-6-phosphate isomerase 1.